The chain runs to 107 residues: Regulatory protein SoxS (107 aa).

The HTH araC/xylS-type domain occupies 8–106 (QTLIEWIDEH…DRTPSDYRHR (99 aa)). 2 DNA-binding regions (H-T-H motif) span residues 25-46 (DVVA…RTVT) and 73-96 (IFDI…RREF).

Its subcellular location is the cytoplasm. In terms of biological role, transcriptional activator of the superoxide response regulon of E.coli that includes at least 10 genes such as sodA, nfo, zwf and micF. Binds the DNA sequence 5'-GCACN(7)CAA-3'. It also facilitates the subsequent binding of RNA polymerase to the micF and the nfo promoters. In Salmonella typhimurium (strain LT2 / SGSC1412 / ATCC 700720), this protein is Regulatory protein SoxS (soxS).